Consider the following 119-residue polypeptide: Fluoride-specific ion channel FluC (119 aa).

4 helical membrane passes run 5 to 25, 30 to 50, 59 to 79, and 97 to 117; these read IIPLSIGAALGATARWLLNLA, IPPATGNLFANWIGAFLIGIF, WKLLLITGFLGSLTTLSGFSL, and IFLHTAGSLLLTWLGLKIGAA. Residues Gly-69 and Thr-72 each coordinate Na(+).

Belongs to the fluoride channel Fluc/FEX (TC 1.A.43) family.

It localises to the cell inner membrane. It catalyses the reaction fluoride(in) = fluoride(out). Na(+) is not transported, but it plays an essential structural role and its presence is essential for fluoride channel function. In terms of biological role, fluoride-specific ion channel. Important for reducing fluoride concentration in the cell, thus reducing its toxicity. The polypeptide is Fluoride-specific ion channel FluC (Neisseria meningitidis serogroup B (strain ATCC BAA-335 / MC58)).